A 154-amino-acid polypeptide reads, in one-letter code: MFGADKGTADRLDGKKLHIGIVQARFNSGITNALAAACCAELLALGVQDKHIMQVQVPGALEIPVALQAMAERNHYDALIALGCIIRGQTYHFELVANESGAGVTRLALDYQIPIANAIITVENLEQAIARQSEKGADAARVAVEMANLLDALS.

5-amino-6-(D-ribitylamino)uracil contacts are provided by residues F26, 60 to 62 (ALE), and 84 to 86 (CII). Residue 89–90 (QT) coordinates (2S)-2-hydroxy-3-oxobutyl phosphate. H92 functions as the Proton donor in the catalytic mechanism. 5-amino-6-(D-ribitylamino)uracil is bound at residue N117. Residue R131 participates in (2S)-2-hydroxy-3-oxobutyl phosphate binding.

It belongs to the DMRL synthase family.

The catalysed reaction is (2S)-2-hydroxy-3-oxobutyl phosphate + 5-amino-6-(D-ribitylamino)uracil = 6,7-dimethyl-8-(1-D-ribityl)lumazine + phosphate + 2 H2O + H(+). It participates in cofactor biosynthesis; riboflavin biosynthesis; riboflavin from 2-hydroxy-3-oxobutyl phosphate and 5-amino-6-(D-ribitylamino)uracil: step 1/2. Catalyzes the formation of 6,7-dimethyl-8-ribityllumazine by condensation of 5-amino-6-(D-ribitylamino)uracil with 3,4-dihydroxy-2-butanone 4-phosphate. This is the penultimate step in the biosynthesis of riboflavin. The protein is 6,7-dimethyl-8-ribityllumazine synthase of Verminephrobacter eiseniae (strain EF01-2).